A 100-amino-acid polypeptide reads, in one-letter code: Acylphosphatase (100 aa).

Residues 14-100 (RWRFFVEGKV…TGADWFEIRS (87 aa)) enclose the Acylphosphatase-like domain. Residues Arg-29 and Asn-47 contribute to the active site.

It belongs to the acylphosphatase family.

The enzyme catalyses an acyl phosphate + H2O = a carboxylate + phosphate + H(+). This Synechococcus sp. (strain WH7803) protein is Acylphosphatase (acyP).